Here is a 169-residue protein sequence, read N- to C-terminus: Der GTPase-activating protein YihI (169 aa).

Disordered stretches follow at residues 1–98 (MKPS…PQAE) and 144–169 (GLSY…LRGN). Residues 10–19 (SKGHAKARRK) are compositionally biased toward basic residues. Basic and acidic residues predominate over residues 20 to 30 (TREELDQEARD). A compositionally biased stretch (basic residues) spans 31–40 (RKRLKKRRGH). Residues 49 to 58 (GNTTSGSKGQ) are compositionally biased toward polar residues. Residues 147–159 (YDDDEEEEEDEKQ) are compositionally biased toward acidic residues. Residues 160 to 169 (EDMMRLLRGN) are compositionally biased toward basic and acidic residues.

Belongs to the YihI family. Interacts with Der.

Its function is as follows. A GTPase-activating protein (GAP) that modifies Der/EngA GTPase function. May play a role in ribosome biogenesis. The polypeptide is Der GTPase-activating protein YihI (Escherichia coli O6:K15:H31 (strain 536 / UPEC)).